The chain runs to 428 residues: NADP-specific glutamate dehydrogenase (428 aa).

Residues Lys-68 and Lys-92 each contribute to the substrate site. Lys-104 acts as the Proton donor in catalysis. NADP(+) contacts are provided by Thr-188 and Asn-219. Ser-356 is a substrate binding site.

Belongs to the Glu/Leu/Phe/Val dehydrogenases family. Homohexamer.

The enzyme catalyses L-glutamate + NADP(+) + H2O = 2-oxoglutarate + NH4(+) + NADPH + H(+). Catalyzes the reversible oxidative deamination of glutamate to alpha-ketoglutarate and ammonia. In Synechocystis sp. (strain ATCC 27184 / PCC 6803 / Kazusa), this protein is NADP-specific glutamate dehydrogenase (gdhA).